The chain runs to 169 residues: Peptide deformylase (169 aa).

Positions 94 and 136 each coordinate Fe cation. E137 is a catalytic residue. A Fe cation-binding site is contributed by H140.

It belongs to the polypeptide deformylase family. Fe(2+) is required as a cofactor.

The catalysed reaction is N-terminal N-formyl-L-methionyl-[peptide] + H2O = N-terminal L-methionyl-[peptide] + formate. Its function is as follows. Removes the formyl group from the N-terminal Met of newly synthesized proteins. Requires at least a dipeptide for an efficient rate of reaction. N-terminal L-methionine is a prerequisite for activity but the enzyme has broad specificity at other positions. The sequence is that of Peptide deformylase from Desulfotalea psychrophila (strain LSv54 / DSM 12343).